Here is an 81-residue protein sequence, read N- to C-terminus: Small ribosomal subunit protein bS16 (81 aa).

This sequence belongs to the bacterial ribosomal protein bS16 family.

This is Small ribosomal subunit protein bS16 from Clostridium botulinum (strain Eklund 17B / Type B).